Here is a 458-residue protein sequence, read N- to C-terminus: tRNA modification GTPase MnmE (458 aa).

Residues R26, E88, and R127 each contribute to the (6S)-5-formyl-5,6,7,8-tetrahydrofolate site. One can recognise a TrmE-type G domain in the interval 224–378 (GLSTAIIGRP…IEDRINQLFF (155 aa)). N234 contacts K(+). Residues 234–239 (NVGKSS), 253–259 (TDIAGTT), and 278–281 (DTAG) contribute to the GTP site. S238 is a binding site for Mg(2+). The K(+) site is built by T253, I255, and T258. A Mg(2+)-binding site is contributed by T259. Residue K458 coordinates (6S)-5-formyl-5,6,7,8-tetrahydrofolate.

Belongs to the TRAFAC class TrmE-Era-EngA-EngB-Septin-like GTPase superfamily. TrmE GTPase family. In terms of assembly, homodimer. Heterotetramer of two MnmE and two MnmG subunits. K(+) is required as a cofactor.

Its subcellular location is the cytoplasm. Functionally, exhibits a very high intrinsic GTPase hydrolysis rate. Involved in the addition of a carboxymethylaminomethyl (cmnm) group at the wobble position (U34) of certain tRNAs, forming tRNA-cmnm(5)s(2)U34. This Streptococcus pyogenes serotype M1 protein is tRNA modification GTPase MnmE.